The chain runs to 233 residues: Guanylate kinase (233 aa).

The Guanylate kinase-like domain occupies 3–184 (GTIFIISAPS…AVEQLRAIVL (182 aa)). 10–17 (APSGSGKS) serves as a coordination point for ATP.

The protein belongs to the guanylate kinase family.

It localises to the cytoplasm. The catalysed reaction is GMP + ATP = GDP + ADP. Its function is as follows. Essential for recycling GMP and indirectly, cGMP. This chain is Guanylate kinase, found in Koribacter versatilis (strain Ellin345).